A 114-amino-acid chain; its full sequence is Period circadian protein (114 aa).

Positions 23 to 114 are disordered; that stretch reads VTNTSIAGTG…VTLTESLLNK (92 aa). Tandem repeats lie at residues 30–31, 33–34, 36–37, 38–39, 40–41, 42–43, 44–45, 46–47, 48–49, 50–51, 52–53, 54–55, 56–57, and 58–59. Positions 30–79 are enriched in gly residues; the sequence is GTGGTGGTGTGTGTGTGTGTGTGTGTGTGTDTGTGTGTGTETGTGTGTGT. The 28 X 2 AA approximate tandem repeats of G-[TN] stretch occupies residues 30 to 87; the sequence is GTGGTGGTGTGTGTGTGTGTGTGTGTGTGTDTGTGTGTGTETGTGTGTGTRNGTNSGT. Residues 60–61 form a 15; approximate repeat; it reads DT. 4 repeat units span residues 62 to 63, 64 to 65, 66 to 67, and 68 to 69. One copy of the 20; approximate repeat lies at 70 to 71; the sequence is ET. A run of 4 repeats spans residues 72–73, 74–75, 76–77, and 78–79. One copy of the 25; approximate repeat lies at 80 to 81; it reads RN. The span at 80–91 shows a compositional bias: low complexity; it reads RNGTNSGTKTGT. Repeat unit 26 spans residues 82-83; the sequence is GT. A 27; approximate repeat occupies 84–85; sequence NS. Repeat 28 spans residues 86 to 87; sequence GT. Residues 105-114 show a composition bias toward polar residues; sequence VTLTESLLNK.

As to quaternary structure, forms a heterodimer with timeless (TIM); the complex then translocates into the nucleus. In terms of processing, phosphorylated with a circadian rhythmicity, probably by the double-time protein (dbt). Phosphorylation could be implicated in the stability of per monomer and in the formation of heterodimer per-tim.

It localises to the nucleus. Its subcellular location is the cytoplasm. The protein localises to the perinuclear region. Essential for biological clock functions. Determines the period length of circadian and ultradian rhythms; an increase in PER dosage leads to shortened circadian rhythms and a decrease leads to lengthened circadian rhythms. Essential for the circadian rhythmicity of locomotor activity, eclosion behavior, and for the rhythmic component of the male courtship song that originates in the thoracic nervous system. The biological cycle depends on the rhythmic formation and nuclear localization of the TIM-PER complex. Light induces the degradation of TIM, which promotes elimination of PER. Nuclear activity of the heterodimer coordinatively regulates PER and TIM transcription through a negative feedback loop. Behaves as a negative element in circadian transcriptional loop. Does not appear to bind DNA, suggesting indirect transcriptional inhibition. This chain is Period circadian protein (per), found in Drosophila orena (Fruit fly).